The chain runs to 475 residues: Ubiquilin-like protein (475 aa).

The region spanning 31-105 is the Ubiquitin-like domain; that stretch reads TRVIVKTAGN…IYLVIKSKQG (75 aa). Disordered regions lie at residues 113–138 and 305–325; these read FRDL…VHQP and QVQS…QLTQ. Over residues 129–138 the composition is skewed to polar residues; sequence KGNSSRVHQP.

This chain is Ubiquilin-like protein (UBQLNL), found in Homo sapiens (Human).